We begin with the raw amino-acid sequence, 363 residues long: Probable L-tyrosine/L-aspartate decarboxylase (363 aa).

Lys-224 is subject to N6-(pyridoxal phosphate)lysine.

It belongs to the group II decarboxylase family. MfnA subfamily. It depends on pyridoxal 5'-phosphate as a cofactor.

The catalysed reaction is L-tyrosine + H(+) = tyramine + CO2. It catalyses the reaction L-aspartate + H(+) = beta-alanine + CO2. The protein operates within cofactor biosynthesis; methanofuran biosynthesis. It participates in cofactor biosynthesis; coenzyme A biosynthesis. Functionally, catalyzes the decarboxylation of L-tyrosine to produce tyramine for methanofuran biosynthesis. Can also catalyze the decarboxylation of L-aspartate to produce beta-alanine for coenzyme A (CoA) biosynthesis. The protein is Probable L-tyrosine/L-aspartate decarboxylase of Methanosphaerula palustris (strain ATCC BAA-1556 / DSM 19958 / E1-9c).